Consider the following 300-residue polypeptide: Ribosomal protein L11 methyltransferase (300 aa).

S-adenosyl-L-methionine is bound by residues Thr-152, Gly-173, Asp-195, and Asn-234.

Belongs to the methyltransferase superfamily. PrmA family.

The protein resides in the cytoplasm. It carries out the reaction L-lysyl-[protein] + 3 S-adenosyl-L-methionine = N(6),N(6),N(6)-trimethyl-L-lysyl-[protein] + 3 S-adenosyl-L-homocysteine + 3 H(+). In terms of biological role, methylates ribosomal protein L11. This chain is Ribosomal protein L11 methyltransferase, found in Burkholderia lata (strain ATCC 17760 / DSM 23089 / LMG 22485 / NCIMB 9086 / R18194 / 383).